The chain runs to 1008 residues: Pre-mRNA-splicing factor SNU114 (1008 aa).

At serine 85 the chain carries Phosphoserine. Threonine 88 is modified (phosphothreonine). Residues 131–338 (ERIINVGVIG…SYYYAHSIPS (208 aa)) enclose the tr-type G domain. The segment at 140–147 (GPLHSGKT) is G1. Residue 140-147 (GPLHSGKT) coordinates GTP. Positions 188–192 (GLSIK) are G2. The segment at 214–217 (DAPG) is G3. GTP is bound by residues 214-218 (DAPGH) and 268-271 (NKLD). The segment at 268 to 271 (NKLD) is G4. Residues 315-317 (STK) form a G5 region. Positions 504–536 (TSQSESRQKRQLHDISKTETSNEDEDEDDETPS) are disordered. Positions 509 to 520 (SRQKRQLHDISK) are enriched in basic and acidic residues. Acidic residues predominate over residues 524 to 536 (SNEDEDEDDETPS).

The protein belongs to the TRAFAC class translation factor GTPase superfamily. Classic translation factor GTPase family. EF-G/EF-2 subfamily. In terms of assembly, belongs to the CWC complex (or CEF1-associated complex), a spliceosome sub-complex reminiscent of a late-stage spliceosome composed of the U2, U5 and U6 snRNAs and at least BUD13, BUD31, BRR2, CDC40, CEF1, CLF1, CUS1, CWC2, CWC15, CWC21, CWC22, CWC23, CWC24, CWC25, CWC27, ECM2, HSH155, IST3, ISY1, LEA1, MSL1, NTC20, PRP8, PRP9, PRP11, PRP19, PRP21, PRP22, PRP45, PRP46, SLU7, SMB1, SMD1, SMD2, SMD3, SMX2, SMX3, SNT309, SNU114, SPP2, SYF1, SYF2, RSE1 and YJU2. Component of the U4/U6-U5 tri-snRNP complex composed of the U4, U6 and U5 snRNAs and at least PRP3, PRP4, PRP6, PRP8, PRP18, PRP31, PRP38, SNU13, SNU23, SNU66, SNU114, SPP381, SMB1, SMD1, SMD2, SMD3, SMX2, SMX3, LSM2, LSM3, LSM4, LSM5, LSM6, LSM7, LSM8, BRR2 and DIB1. Interacts (via C-terminus) with CWC21. Interacts (via N-terminus) with PRP8 (via SCwid domain).

Its subcellular location is the nucleus. Functionally, component of the U5 snRNP complex required for pre-mRNA splicing. Binds GTP. The sequence is that of Pre-mRNA-splicing factor SNU114 (SNU114) from Saccharomyces cerevisiae (strain ATCC 204508 / S288c) (Baker's yeast).